The sequence spans 395 residues: Imidazolonepropionase (395 aa).

Residues H63 and H65 each coordinate Fe(3+). Residues H63 and H65 each coordinate Zn(2+). R72, Y135, and H168 together coordinate 4-imidazolone-5-propanoate. Y135 contacts N-formimidoyl-L-glutamate. H233 contributes to the Fe(3+) binding site. H233 contacts Zn(2+). Residue Q236 participates in 4-imidazolone-5-propanoate binding. Position 308 (D308) interacts with Fe(3+). Zn(2+) is bound at residue D308. N-formimidoyl-L-glutamate is bound by residues N310 and G312. T313 serves as a coordination point for 4-imidazolone-5-propanoate.

This sequence belongs to the metallo-dependent hydrolases superfamily. HutI family. Requires Zn(2+) as cofactor. It depends on Fe(3+) as a cofactor.

It localises to the cytoplasm. The enzyme catalyses 4-imidazolone-5-propanoate + H2O = N-formimidoyl-L-glutamate. It participates in amino-acid degradation; L-histidine degradation into L-glutamate; N-formimidoyl-L-glutamate from L-histidine: step 3/3. Catalyzes the hydrolytic cleavage of the carbon-nitrogen bond in imidazolone-5-propanoate to yield N-formimidoyl-L-glutamate. It is the third step in the universal histidine degradation pathway. The sequence is that of Imidazolonepropionase from Cereibacter sphaeroides (strain ATCC 17023 / DSM 158 / JCM 6121 / CCUG 31486 / LMG 2827 / NBRC 12203 / NCIMB 8253 / ATH 2.4.1.) (Rhodobacter sphaeroides).